Here is a 364-residue protein sequence, read N- to C-terminus: Lysophosphatidic acid receptor 1 (364 aa).

The Extracellular portion of the chain corresponds to 1 to 50 (MAAISTSIPVISQPQFTAMNEPQCFYNESIAFFYNRSGKHLATEWNTVSK). 2 disulfide bridges follow: cysteine 24-cysteine 190 and cysteine 188-cysteine 195. N-linked (GlcNAc...) asparagine glycosylation is found at asparagine 27 and asparagine 35. Residue lysine 39 coordinates a 1-acyl-sn-glycero-3-phosphate. Residues 51–75 (LVMGLGITVCIFIMLANLLVMVAIY) traverse the membrane as a helical segment. Topologically, residues 76–83 (VNRRFHFP) are cytoplasmic. Residues 84-107 (IYYLMANLAAADFFAGLAYFYLMF) form a helical membrane-spanning segment. Residues 108-121 (NTGPNTRRLTVSTW) lie on the Extracellular side of the membrane. A helical transmembrane segment spans residues 122–144 (LLRQGLIDTSLTASVANLLAIAI). An a 1-acyl-sn-glycero-3-phosphate-binding site is contributed by 124-129 (RQGLID). Topologically, residues 145–163 (ERHITVFRMQLHTRMSNRR) are cytoplasmic. A helical membrane pass occupies residues 164-184 (VVVVIVVIWTMAIVMGAIPSV). Over 185–204 (GWNCICDIENCSNMAPLYSD) the chain is Extracellular. Residues 205 to 225 (SYLVFWAIFNLVTFVVMVVLY) form a helical membrane-spanning segment. Tryptophan 210 serves as a coordination point for a 1-acyl-sn-glycero-3-phosphate. Residues 226-255 (AHIFGYVRQRTMRMSRHSSGPRRNRDTMMS) are Cytoplasmic-facing. Residues 256–280 (LLKTVVIVLGAFIICWTPGLVLLLL) form a helical membrane-spanning segment. Residues 281-294 (DVCCPQCDVLAYEK) are Extracellular-facing. A disulfide bond links cysteine 284 and cysteine 287. The helical transmembrane segment at 295–315 (FFLLLAEFNSAMNPIIYSYRD) threads the bilayer. The Cytoplasmic segment spans residues 316 to 364 (KEMSATFRQILCCQRSENPTGPTEGSDRSASSLNHTILAGVHSNDHSVV). Phosphoserine is present on serine 341. Phosphothreonine is present on threonine 351.

This sequence belongs to the G-protein coupled receptor 1 family. As to quaternary structure, interacts with RALA and GRK2. Interacts with GNAQ and GNA13. Interacts with CD14; the interaction is enhanced by exposure to bacterial lipopolysaccharide (LPS). In terms of processing, N-glycosylated. Expressed in many adult organs, including brain, heart, colon, small intestine, placenta, prostate, ovary, pancreas, testes, spleen, skeletal muscle, and kidney. Little or no expression in liver, lung, thymus, or peripheral blood leukocytes. Detected in lung fibroblasts from bronchoalveolar fluid from patients with idiopathic pulmonary fibrosis. Detected in bone marrow-derived mesenchymal stem cells.

It localises to the cell surface. It is found in the cell membrane. The protein localises to the endosome. Functionally, receptor for lysophosphatidic acid (LPA). Plays a role in the reorganization of the actin cytoskeleton, cell migration, differentiation and proliferation, and thereby contributes to the responses to tissue damage and infectious agents. Activates downstream signaling cascades via the G(i)/G(o), G(12)/G(13), and G(q) families of heteromeric G proteins. Signaling inhibits adenylyl cyclase activity and decreases cellular cAMP levels. Signaling triggers an increase of cytoplasmic Ca(2+) levels. Activates RALA; this leads to the activation of phospholipase C (PLC) and the formation of inositol 1,4,5-trisphosphate. Signaling mediates activation of down-stream MAP kinases. Contributes to the regulation of cell shape. Promotes Rho-dependent reorganization of the actin cytoskeleton in neuronal cells and neurite retraction. Promotes the activation of Rho and the formation of actin stress fibers. Promotes formation of lamellipodia at the leading edge of migrating cells via activation of RAC1. Through its function as LPA receptor, plays a role in chemotaxis and cell migration, including responses to injury and wounding. Plays a role in triggering inflammation in response to bacterial lipopolysaccharide (LPS) via its interaction with CD14. Promotes cell proliferation in response to LPA. Inhibits the intracellular ciliogenesis pathway in response to LPA and through AKT1 activation. Required for normal skeleton development. May play a role in osteoblast differentiation. Required for normal brain development. Required for normal proliferation, survival and maturation of newly formed neurons in the adult dentate gyrus. Plays a role in pain perception and in the initiation of neuropathic pain. This chain is Lysophosphatidic acid receptor 1 (LPAR1), found in Homo sapiens (Human).